Reading from the N-terminus, the 585-residue chain is Nucleoporin p58/p45 (585 aa).

A run of 5 repeats spans residues 7–8, 30–31, 42–43, 61–62, and 66–67. The segment at 7 to 565 is 14 X 2 AA repeats of F-G; that stretch reads FGSGTLGSTT…VSNPASAGFG (559 aa). The disordered stretch occupies residues 194–232; the sequence is TSAASSEGLGGIDFSTSSDKKSDKTGTRPEDSKALKDEN. Residues 211–232 are compositionally biased toward basic and acidic residues; that stretch reads SDKKSDKTGTRPEDSKALKDEN. Coiled coils occupy residues 242 to 262 and 300 to 367; these read ENLQKFVKEQKQVQEEISRMS and ETAQ…SHIT. Thr-317 carries the post-translational modification Phosphothreonine. 9 consecutive repeat copies span residues 474-475, 478-479, 499-500, 505-506, 515-516, 517-518, 531-532, 554-555, and 564-565. Positions 563–585 are disordered; that stretch reads GFGTGGQLLQLKRPPAGNKRGKR.

This sequence belongs to the NUP58 family. Component of the p62 complex, a complex composed of NUP62, NUP54, and isoform p58 and isoform p45 of NUP58. Isoform p58 interacts with NUTF2. Isoform p58 interacts with SRP1-alpha and Importin p97 proteins when they are together, but not with SRP1-alpha protein alone. In terms of processing, O-glycosylated. Expressed in liver.

The protein localises to the nucleus. Its subcellular location is the nuclear pore complex. The protein resides in the nucleus membrane. In terms of biological role, component of the nuclear pore complex, a complex required for the trafficking across the nuclear membrane. The sequence is that of Nucleoporin p58/p45 from Rattus norvegicus (Rat).